The following is a 52-amino-acid chain: ATP synthase protein 8 (52 aa).

A helical transmembrane segment spans residues 10 to 30; that stretch reads FLMSLMIMMILIFMTINFYFF.

Belongs to the ATPase protein 8 family. In terms of assembly, F-type ATPases have 2 components, CF(1) - the catalytic core - and CF(0) - the membrane proton channel.

Its subcellular location is the mitochondrion membrane. Mitochondrial membrane ATP synthase (F(1)F(0) ATP synthase or Complex V) produces ATP from ADP in the presence of a proton gradient across the membrane which is generated by electron transport complexes of the respiratory chain. F-type ATPases consist of two structural domains, F(1) - containing the extramembraneous catalytic core and F(0) - containing the membrane proton channel, linked together by a central stalk and a peripheral stalk. During catalysis, ATP synthesis in the catalytic domain of F(1) is coupled via a rotary mechanism of the central stalk subunits to proton translocation. Part of the complex F(0) domain. Minor subunit located with subunit a in the membrane. The polypeptide is ATP synthase protein 8 (MT-ATP8) (Rhipicephalus sanguineus (Brown dog tick)).